We begin with the raw amino-acid sequence, 608 residues long: 1-deoxy-D-xylulose-5-phosphate synthase (608 aa).

Thiamine diphosphate is bound by residues His80 and Gly121–Ser123. Asp152 contacts Mg(2+). Residues Gly153 to Ala154, Asn181, Tyr282, and Glu357 each bind thiamine diphosphate. A Mg(2+)-binding site is contributed by Asn181.

It belongs to the transketolase family. DXPS subfamily. In terms of assembly, homodimer. Mg(2+) serves as cofactor. Thiamine diphosphate is required as a cofactor.

The enzyme catalyses D-glyceraldehyde 3-phosphate + pyruvate + H(+) = 1-deoxy-D-xylulose 5-phosphate + CO2. It functions in the pathway metabolic intermediate biosynthesis; 1-deoxy-D-xylulose 5-phosphate biosynthesis; 1-deoxy-D-xylulose 5-phosphate from D-glyceraldehyde 3-phosphate and pyruvate: step 1/1. In terms of biological role, catalyzes the acyloin condensation reaction between C atoms 2 and 3 of pyruvate and glyceraldehyde 3-phosphate to yield 1-deoxy-D-xylulose-5-phosphate (DXP). This chain is 1-deoxy-D-xylulose-5-phosphate synthase, found in Buchnera aphidicola subsp. Acyrthosiphon pisum (strain 5A).